A 45-amino-acid polypeptide reads, in one-letter code: Mu-conotoxin-like Cal 12.1.2e (45 aa).

Disulfide bonds link Cys-3/Cys-16, Cys-11/Cys-28, Cys-18/Cys-33, and Cys-27/Cys-39. Trp-17 is modified (6'-bromotryptophan). The residue at position 23 (Pro-23) is a 4-hydroxyproline. Trp-38 is subject to 6'-bromotryptophan. Pro-40 carries the post-translational modification 4-hydroxyproline.

In terms of tissue distribution, expressed by the venom duct.

It is found in the secreted. In terms of biological role, mu-conotoxins block voltage-gated sodium channels. This toxin reversibly blocks voltage-gated sodium channel in cephalopods, with no alteration in the voltage dependence of sodium conductance or on the kinetics of inactivation. The chain is Mu-conotoxin-like Cal 12.1.2e from Californiconus californicus (California cone).